A 244-amino-acid chain; its full sequence is L-xylulose reductase (244 aa).

N-acetylmethionine is present on methionine 1. 11 to 39 (LVTGAGKGIGRSTVLALQAAGAHVVAVSR) is a binding site for NADP(+). Position 21 is an omega-N-methylarginine (arginine 21). The residue at position 46 (serine 46) is a Phosphoserine. Residue serine 136 participates in substrate binding. The active-site Proton acceptor is the tyrosine 149. The active site involves lysine 153.

It belongs to the short-chain dehydrogenases/reductases (SDR) family. In terms of assembly, homotetramer. Highly expressed in kidney and liver. Expressed in epididymis. Weakly expressed in brain, heart, lung, spleen and testis.

It localises to the membrane. It is found in the cytoplasmic vesicle. Its subcellular location is the secretory vesicle. The protein resides in the acrosome. It catalyses the reaction xylitol + NADP(+) = L-xylulose + NADPH + H(+). Its function is as follows. Catalyzes the NADPH-dependent reduction of several pentoses, tetroses, trioses, alpha-dicarbonyl compounds and L-xylulose. Participates in the uronate cycle of glucose metabolism. May play a role in the water absorption and cellular osmoregulation in the proximal renal tubules by producing xylitol, an osmolyte, thereby preventing osmolytic stress from occurring in the renal tubules. The chain is L-xylulose reductase (DCXR) from Mesocricetus auratus (Golden hamster).